The chain runs to 150 residues: Sulfur-rich protein, serovar D (150 aa).

2 helical membrane passes run 41 to 61 and 67 to 87; these read VGLV…LVSA and AIYL…VGIL.

The protein resides in the membrane. The chain is Sulfur-rich protein, serovar D (srp) from Chlamydia trachomatis serovar D (strain ATCC VR-885 / DSM 19411 / UW-3/Cx).